A 445-amino-acid polypeptide reads, in one-letter code: Tubulin beta-5 chain (445 aa).

GTP-binding residues include Q11, E69, S138, G142, T143, G144, N204, and N226. Position 69 (E69) interacts with Mg(2+). Residues 420 to 445 (AEYQQYQDATADDEYEEGEEEEEEAA) are disordered. Positions 429–445 (TADDEYEEGEEEEEEAA) are enriched in acidic residues.

The protein belongs to the tubulin family. In terms of assembly, dimer of alpha and beta chains. A typical microtubule is a hollow water-filled tube with an outer diameter of 25 nm and an inner diameter of 15 nM. Alpha-beta heterodimers associate head-to-tail to form protofilaments running lengthwise along the microtubule wall with the beta-tubulin subunit facing the microtubule plus end conferring a structural polarity. Microtubules usually have 13 protofilaments but different protofilament numbers can be found in some organisms and specialized cells. Mg(2+) serves as cofactor.

Its subcellular location is the cytoplasm. It is found in the cytoskeleton. Its function is as follows. Tubulin is the major constituent of microtubules, a cylinder consisting of laterally associated linear protofilaments composed of alpha- and beta-tubulin heterodimers. Microtubules grow by the addition of GTP-tubulin dimers to the microtubule end, where a stabilizing cap forms. Below the cap, tubulin dimers are in GDP-bound state, owing to GTPase activity of alpha-tubulin. The protein is Tubulin beta-5 chain of Gossypium hirsutum (Upland cotton).